Consider the following 216-residue polypeptide: Histidine biosynthesis bifunctional protein HisIE (216 aa).

Residues 1-132 (MENILKELKF…KVYEAENAKI (132 aa)) are phosphoribosyl-AMP cyclohydrolase. Residues 133–216 (LQEIYDVIVD…IKLEDIYEEA (84 aa)) are phosphoribosyl-ATP pyrophosphohydrolase.

The protein in the N-terminal section; belongs to the PRA-CH family. It in the C-terminal section; belongs to the PRA-PH family.

The protein localises to the cytoplasm. The enzyme catalyses 1-(5-phospho-beta-D-ribosyl)-ATP + H2O = 1-(5-phospho-beta-D-ribosyl)-5'-AMP + diphosphate + H(+). It carries out the reaction 1-(5-phospho-beta-D-ribosyl)-5'-AMP + H2O = 1-(5-phospho-beta-D-ribosyl)-5-[(5-phospho-beta-D-ribosylamino)methylideneamino]imidazole-4-carboxamide. It functions in the pathway amino-acid biosynthesis; L-histidine biosynthesis; L-histidine from 5-phospho-alpha-D-ribose 1-diphosphate: step 2/9. Its pathway is amino-acid biosynthesis; L-histidine biosynthesis; L-histidine from 5-phospho-alpha-D-ribose 1-diphosphate: step 3/9. The chain is Histidine biosynthesis bifunctional protein HisIE (hisI) from Thermoanaerobacter pseudethanolicus (strain ATCC 33223 / 39E) (Clostridium thermohydrosulfuricum).